We begin with the raw amino-acid sequence, 320 residues long: Olfactory receptor 51E2 (320 aa).

At 1–27 the chain is on the extracellular side; sequence MSSCNFTHATFLLIGIPGLEEAHFWFG. Residue Asn-5 is glycosylated (N-linked (GlcNAc...) asparagine). A helical transmembrane segment spans residues 28 to 48; sequence FPLLSMYAVALFGNCIVVFIV. Residues 49 to 53 lie on the Cytoplasmic side of the membrane; the sequence is RTERS. A helical membrane pass occupies residues 54–74; that stretch reads LHAPMYLFLCMLAAIDLALST. Residues 75 to 98 lie on the Extracellular side of the membrane; the sequence is STMPKILALFWFDSREITFDACLA. Cys-96 and Cys-178 form a disulfide bridge. A helical transmembrane segment spans residues 99-119; it reads QMFFIHTLSAIESTILLAMAF. At 120–141 the chain is on the cytoplasmic side; sequence DRYVAICHPLRHAAVLNNTVTV. A helical transmembrane segment spans residues 142 to 162; that stretch reads QIGMVALVRGSLFFFPLPLLI. Over 163–200 the chain is Extracellular; the sequence is KRLAFCHSNVLSHSYCVHQDVMKLAYTDTLPNVVYGLT. The chain crosses the membrane as a helical span at residues 201–221; sequence AILLVMGVDVMFISLSYFLII. The Cytoplasmic segment spans residues 222–239; the sequence is RTVLQLPSKSERAKAFGT. Residues 240-260 form a helical membrane-spanning segment; the sequence is CVSHISVVLAFYVPLIGLSVV. Residues 261–269 are Extracellular-facing; sequence HRFGNSLDP. Residues 270–290 traverse the membrane as a helical segment; sequence IVHVLMGDVYLLLPPVINPII. The Cytoplasmic portion of the chain corresponds to 291-320; sequence YGAKTKQIRTRVLAMFKISCDKDIEAGGNT.

It belongs to the G-protein coupled receptor 1 family. In brain, expressed in medulla oblongata by cells close to the fourth ventricle, in the area postrema, the nucleus tractus solitarius. Expressed in olfactory epithelium and vomeronasal organ. Expressed in kidney by large renal vessels, renal afferent arterioles, and extrarenal vascular beds. In small resistance vessels the expression is restricted to cells of the juxtaglomerular afferent arteriole, which mediate renin secretion. Also detected in small blood vessels in a variety of tissues including heart, diaphragm, skeletal muscle, and skin. In the heart, esophagus, and stomach it is detected in axons of autonomic neurons and neurons of the enteric plexus. Also detected in colon and liver. Expressed in the glomus cells of the carotid body.

Its subcellular location is the cell membrane. It localises to the early endosome membrane. In terms of biological role, olfactory receptor. The activity of this receptor is probably mediated by G-proteins which induce elevation of intracellular Ca(2+), cAMP and activation of phosphorylation of the protein kinases PKA and MAPK3/MAPK1. Activation of OR51E2 may affect melanocyte proliferation, differentiation, and melanogenesis and may increase proliferation and migration of primary retinal pigment epithelial (RPE) cells. Activated by the short chain fatty acids (SCFA), acetate and propionate. In response to SCFA, may positively regulate renin secretion and increase blood pressure. May also be activated by steroid hormones and regulate cell proliferation. Activated by L-lactate in glomus cells. This Mus musculus (Mouse) protein is Olfactory receptor 51E2 (Or51e2).